A 66-amino-acid chain; its full sequence is MAKGKDAPRVRVILECTGCVRNAVSRGVSRYITQKNRHNTSKQLELRKFCPYCHKHMIHGEIKINK.

The protein belongs to the bacterial ribosomal protein bL33 family.

It is found in the plastid. Its subcellular location is the chloroplast. In Jasminum nudiflorum (Winter jasmine), this protein is Large ribosomal subunit protein bL33c.